Here is a 270-residue protein sequence, read N- to C-terminus: Phosphatidylglycerol--prolipoprotein diacylglyceryl transferase (270 aa).

The next 7 helical transmembrane spans lie at 17-37, 59-79, 95-115, 129-149, 175-195, 202-222, and 237-257; these read LAIRWYGLMYLAGFIMFLWFG, MLFYGVLGVILGGRLGYVLFY, WEGGMAFHGGFLGVLIAMWVF, FIAPMIPCGLAAGRIGNFING, PSQLYQFAGEGVALFIILWLF, MGAVSGVFLIGYGAFRFLAEF, and LSMGQWLSLPMIVIGAVMVVW. Arg-142 contributes to the a 1,2-diacyl-sn-glycero-3-phospho-(1'-sn-glycerol) binding site.

Belongs to the Lgt family.

Its subcellular location is the cell inner membrane. It carries out the reaction L-cysteinyl-[prolipoprotein] + a 1,2-diacyl-sn-glycero-3-phospho-(1'-sn-glycerol) = an S-1,2-diacyl-sn-glyceryl-L-cysteinyl-[prolipoprotein] + sn-glycerol 1-phosphate + H(+). It functions in the pathway protein modification; lipoprotein biosynthesis (diacylglyceryl transfer). In terms of biological role, catalyzes the transfer of the diacylglyceryl group from phosphatidylglycerol to the sulfhydryl group of the N-terminal cysteine of a prolipoprotein, the first step in the formation of mature lipoproteins. The polypeptide is Phosphatidylglycerol--prolipoprotein diacylglyceryl transferase (Cupriavidus metallidurans (strain ATCC 43123 / DSM 2839 / NBRC 102507 / CH34) (Ralstonia metallidurans)).